A 327-amino-acid polypeptide reads, in one-letter code: Lipoyl synthase (327 aa).

Cys72, Cys77, Cys83, Cys98, Cys102, Cys105, and Ser313 together coordinate [4Fe-4S] cluster. In terms of domain architecture, Radical SAM core spans 83 to 302; the sequence is CWSHGTATIM…RKVGLEKGFL (220 aa).

The protein belongs to the radical SAM superfamily. Lipoyl synthase family. It depends on [4Fe-4S] cluster as a cofactor.

The protein localises to the cytoplasm. The catalysed reaction is [[Fe-S] cluster scaffold protein carrying a second [4Fe-4S](2+) cluster] + N(6)-octanoyl-L-lysyl-[protein] + 2 oxidized [2Fe-2S]-[ferredoxin] + 2 S-adenosyl-L-methionine + 4 H(+) = [[Fe-S] cluster scaffold protein] + N(6)-[(R)-dihydrolipoyl]-L-lysyl-[protein] + 4 Fe(3+) + 2 hydrogen sulfide + 2 5'-deoxyadenosine + 2 L-methionine + 2 reduced [2Fe-2S]-[ferredoxin]. The protein operates within protein modification; protein lipoylation via endogenous pathway; protein N(6)-(lipoyl)lysine from octanoyl-[acyl-carrier-protein]: step 2/2. Catalyzes the radical-mediated insertion of two sulfur atoms into the C-6 and C-8 positions of the octanoyl moiety bound to the lipoyl domains of lipoate-dependent enzymes, thereby converting the octanoylated domains into lipoylated derivatives. The protein is Lipoyl synthase of Francisella tularensis subsp. holarctica (strain FTNF002-00 / FTA).